A 224-amino-acid polypeptide reads, in one-letter code: Envelope glycoprotein L (224 aa).

Residues 1 to 16 (MGFVCLFGLVVMGAWG) form the signal peptide. Positions 20–161 (GSQATEYVLR…FDYSRTRRCV (142 aa)) are interaction with gH. In terms of domain architecture, gL alphaherpesvirus-type spans 23–201 (ATEYVLRSVI…LATQPPVLAL (179 aa)). Intrachain disulfides connect C44–C76 and C149–C160. Positions 168-224 (PANTTSTWEPPVSSDDEASSQSKPLATQPPVLALSNAPPRRVSPTRGRRRHTRLRRN) are disordered. Residues 213–224 (RGRRRHTRLRRN) show a composition bias toward basic residues.

Belongs to the herpesviridae glycoprotein L (gL) family. Alphaherpesvirinae gL subfamily. Interacts with glycoprotein H (gH); this interaction is necessary for the correct processing and cell surface expression of gH. The heterodimer gH/gL seems to interact with gB trimers during fusion.

It is found in the virion membrane. It localises to the host cell membrane. Its subcellular location is the host Golgi apparatus. The protein localises to the host trans-Golgi network. Functionally, the heterodimer glycoprotein H-glycoprotein L is required for the fusion of viral and plasma membranes leading to virus entry into the host cell. Acts as a functional inhibitor of gH and maintains gH in an inhibited form. Upon binding to host integrins, gL dissociates from gH leading to activation of the viral fusion glycoproteins gB and gH. This is Envelope glycoprotein L from Homo sapiens (Human).